The following is a 203-amino-acid chain: Small ribosomal subunit protein uS4 (203 aa).

An S4 RNA-binding domain is found at 93 to 156 (TRLDNLVFRL…QNLAIVNEAI (64 aa)).

Belongs to the universal ribosomal protein uS4 family. As to quaternary structure, part of the 30S ribosomal subunit. Contacts protein S5. The interaction surface between S4 and S5 is involved in control of translational fidelity.

Functionally, one of the primary rRNA binding proteins, it binds directly to 16S rRNA where it nucleates assembly of the body of the 30S subunit. In terms of biological role, with S5 and S12 plays an important role in translational accuracy. This Lacticaseibacillus casei (strain BL23) (Lactobacillus casei) protein is Small ribosomal subunit protein uS4.